Reading from the N-terminus, the 1353-residue chain is Patatin-like phospholipase domain-containing protein ZK370.4 (1353 aa).

The helical transmembrane segment at 12-32 (IFLVTFIYNHVLLILFTVCII) threads the bilayer. Positions 49–64 (TPSSASSSATPSSRNS) are enriched in low complexity. Disordered stretches follow at residues 49-188 (TPSS…STAF) and 199-218 (SRSYFRQNQENNKDTRVRPP). Polar residues predominate over residues 91 to 123 (SPKSGTPTNTQTIEPPTSLNLNMVNSASGSNLS). Composition is skewed to basic residues over residues 126–138 (RRMRKRDWAKKLY) and 170–184 (PRRRSKHGNSSRRRQ). Residues 245-372 (LKML…VITR), 444-581 (FGLV…VLRR), and 570-692 (IYLP…LGQY) each bind a nucleoside 3',5'-cyclic phosphate. A PNPLA domain is found at 942 to 1108 (LVLGGGGARG…VNNVPADVMR (167 aa)). Positions 946–951 (GGGARG) match the GXGXXG motif. The GXSXG motif lies at 973 to 977 (GTSIG). Ser-975 (nucleophile) is an active-site residue. Asp-1095 acts as the Proton acceptor in catalysis. Residues 1095–1097 (DGG) carry the DGA/G motif. Disordered regions lie at residues 1230–1249 (EKETRKFKRQQSRREKPDVS), 1274–1293 (SMSLNPSANGPVGRAGDHFL), and 1305–1353 (YEEE…PPSS). Low complexity predominate over residues 1328 to 1337 (GPPSSSSSGG).

Belongs to the NTE family.

It localises to the membrane. This Caenorhabditis elegans protein is Patatin-like phospholipase domain-containing protein ZK370.4.